A 310-amino-acid chain; its full sequence is Nucleotide-binding protein Ddes_0972 (310 aa).

30-37 is a binding site for ATP; that stretch reads GLSGAGKS. 82–85 is a binding site for GTP; sequence DLRQ.

This sequence belongs to the RapZ-like family.

Displays ATPase and GTPase activities. This is Nucleotide-binding protein Ddes_0972 from Desulfovibrio desulfuricans (strain ATCC 27774 / DSM 6949 / MB).